Consider the following 195-residue polypeptide: Holliday junction branch migration complex subunit RuvA (195 aa).

Residues 1 to 62 (MIEFVKGPVA…EDQQTLYGFR (62 aa)) form a domain I region. Residues 63-141 (SRRERELFNK…ELAPDYVPNE (79 aa)) form a domain II region. The tract at residues 141–145 (EGLFA) is flexible linker. The domain III stretch occupies residues 146-195 (QGASELDEACEALVALGYSEREIAKVRKALSGEILTTDAYIKRALQLLLK).

The protein belongs to the RuvA family. In terms of assembly, homotetramer. Forms an RuvA(8)-RuvB(12)-Holliday junction (HJ) complex. HJ DNA is sandwiched between 2 RuvA tetramers; dsDNA enters through RuvA and exits via RuvB. An RuvB hexamer assembles on each DNA strand where it exits the tetramer. Each RuvB hexamer is contacted by two RuvA subunits (via domain III) on 2 adjacent RuvB subunits; this complex drives branch migration. In the full resolvosome a probable DNA-RuvA(4)-RuvB(12)-RuvC(2) complex forms which resolves the HJ.

Its subcellular location is the cytoplasm. In terms of biological role, the RuvA-RuvB-RuvC complex processes Holliday junction (HJ) DNA during genetic recombination and DNA repair, while the RuvA-RuvB complex plays an important role in the rescue of blocked DNA replication forks via replication fork reversal (RFR). RuvA specifically binds to HJ cruciform DNA, conferring on it an open structure. The RuvB hexamer acts as an ATP-dependent pump, pulling dsDNA into and through the RuvAB complex. HJ branch migration allows RuvC to scan DNA until it finds its consensus sequence, where it cleaves and resolves the cruciform DNA. The polypeptide is Holliday junction branch migration complex subunit RuvA (Exiguobacterium sp. (strain ATCC BAA-1283 / AT1b)).